Reading from the N-terminus, the 427-residue chain is Proline--tRNA ligase (427 aa).

It belongs to the class-II aminoacyl-tRNA synthetase family. ProS type 2 subfamily. As to quaternary structure, homodimer.

It is found in the cytoplasm. It catalyses the reaction tRNA(Pro) + L-proline + ATP = L-prolyl-tRNA(Pro) + AMP + diphosphate. Functionally, catalyzes the attachment of proline to tRNA(Pro) in a two-step reaction: proline is first activated by ATP to form Pro-AMP and then transferred to the acceptor end of tRNA(Pro). This Rickettsia akari (strain Hartford) protein is Proline--tRNA ligase.